The sequence spans 399 residues: Dual specificity mitogen-activated protein kinase kinase 4 (399 aa).

A disordered region spans residues 1–40 (MAAPSPSGGGGSGGGSGSGTPGPVGSPAPGHPAVSSMQGK). The residue at position 2 (A2) is an N-acetylalanine. Residues 7–22 (SGGGGSGGGSGSGTPG) are compositionally biased toward gly residues. Residues 37 to 52 (MQGKRKALKLNFANPP) form a d domain region. An Asymmetric dimethylarginine; alternate modification is found at R58. At R58 the chain carries Omega-N-methylarginine; alternate. Position 90 is a phosphoserine (S90). A Protein kinase domain is found at 102 to 367 (LKDLGEIGRG…YKELLKHPFI (266 aa)). ATP contacts are provided by residues 108-116 (IGRGAYGSV) and K131. D229 functions as the Proton acceptor in the catalytic mechanism. S257 carries the phosphoserine; by MAP3K modification. A Phosphothreonine; by MAP3K modification is found at T261. Residues 364–387 (HPFILMYEERAVEVACYVCKILDQ) are DVD domain.

It belongs to the protein kinase superfamily. STE Ser/Thr protein kinase family. MAP kinase kinase subfamily. As to quaternary structure, interacts with SPAG9. Interacts (via its D domain) with its substrates MAPK8/JNK1, MAPK9/JNK2, MAPK10/JNK3, MAPK11 and MAPK14. Interacts (via its DVD domain) with MAP3Ks activators like MAP3K1/MEKK1 and MAP3K11/MLK3. Interacts with ARRB1, ARRB2 and MAPK8IP3/JIP3. Post-translationally, activated by phosphorylation on Ser-257 and Thr-261 by MAP kinase kinase kinases (MAP3Ks). Abundant expression is seen in the skeletal muscle. It is also widely expressed in other tissues.

The protein resides in the cytoplasm. It localises to the nucleus. The catalysed reaction is L-seryl-[protein] + ATP = O-phospho-L-seryl-[protein] + ADP + H(+). It catalyses the reaction L-threonyl-[protein] + ATP = O-phospho-L-threonyl-[protein] + ADP + H(+). The enzyme catalyses L-tyrosyl-[protein] + ATP = O-phospho-L-tyrosyl-[protein] + ADP + H(+). Activated in response to a variety of cellular stresses, including UV and gamma-irradiation, heat shock, hyperosmolarity, T-cell receptor stimulation, peroxide and inflammatory cytokines. Also activated by developmental cues. MAP2K4/MKK4 is activated by the majority of MKKKs, such as MAP3K5/ASK1, MAP3K1/MEKK1, MAP3K7/TAK1, MAP3K10/MLK2, MAP3K11/MLK3, MAP3K12/DLK and MAP3K13/LZK. Functionally, dual specificity protein kinase which acts as an essential component of the MAP kinase signal transduction pathway. Essential component of the stress-activated protein kinase/c-Jun N-terminal kinase (SAP/JNK) signaling pathway. With MAP2K7/MKK7, is the one of the only known kinase to directly activate the stress-activated protein kinase/c-Jun N-terminal kinases MAPK8/JNK1, MAPK9/JNK2 and MAPK10/JNK3. MAP2K4/MKK4 and MAP2K7/MKK7 both activate the JNKs by phosphorylation, but they differ in their preference for the phosphorylation site in the Thr-Pro-Tyr motif. MAP2K4 shows preference for phosphorylation of the Tyr residue and MAP2K7/MKK7 for the Thr residue. The phosphorylation of the Thr residue by MAP2K7/MKK7 seems to be the prerequisite for JNK activation at least in response to pro-inflammatory cytokines, while other stimuli activate both MAP2K4/MKK4 and MAP2K7/MKK7 which synergistically phosphorylate JNKs. MAP2K4 is required for maintaining peripheral lymphoid homeostasis. The MKK/JNK signaling pathway is also involved in mitochondrial death signaling pathway, including the release cytochrome c, leading to apoptosis. Whereas MAP2K7/MKK7 exclusively activates JNKs, MAP2K4/MKK4 additionally activates the p38 MAPKs MAPK11, MAPK12, MAPK13 and MAPK14. The polypeptide is Dual specificity mitogen-activated protein kinase kinase 4 (MAP2K4) (Homo sapiens (Human)).